A 607-amino-acid chain; its full sequence is WD repeat-containing protein 1-B (607 aa).

13 WD repeats span residues 4-45, 48-87, 93-135, 138-176, 180-218, 224-263, 270-306, 311-351, 358-408, 432-474, 480-518, 523-561, and 566-604; these read EIKK…IRNI, PAIA…IWDT, LLKY…LWDT, SVGE…FFEG, KFKF…LYDG, VCSL…IWDV, TTFN…YLDK, KPFR…YWDA, TFTG…KMDV, LKDK…LYSI, KDEG…VFSV, SEHN…VWTL, and TRIK…QWTV.

Belongs to the WD repeat AIP1 family.

It is found in the cell membrane. The protein localises to the cytoplasm. It localises to the cytoskeleton. Its subcellular location is the nucleus. Its function is as follows. Induces disassembly of actin filaments in conjunction with ADF/cofilin family proteins. Doesn't sever actin filaments alone, but caps the barbed ends of filaments severed by cofilin, which blocks annealing and depolymerization and allows more extensive severing by cofilin. The sequence is that of WD repeat-containing protein 1-B (wdr1-b) from Xenopus laevis (African clawed frog).